Consider the following 456-residue polypeptide: G-protein coupled receptor 39 (456 aa).

Residues 1 to 34 (MASSSGSNHICSRVIDHSHVPEFEVATWIKITLI) are Extracellular-facing. Disulfide bonds link Cys11/Cys191 and Cys108/Cys210. Residues His17 and His19 each contribute to the Zn(2+) site. A helical transmembrane segment spans residues 35-55 (LVYLIIFVVGILGNSVTIRVT). Topologically, residues 56–69 (QVLQKKGYLQKEVT) are cytoplasmic. A helical membrane pass occupies residues 70 to 89 (DHMVSLACSDILVFLIGMPM). The Extracellular segment spans residues 90–109 (EFYSIIWNPLTTPSYALSCK). Residues 110 to 131 (LHTFLFETCSYATLLHVLTLSF) form a helical membrane-spanning segment. At 132 to 151 (ERYIAICHPFKYKAVSGPRQ) the chain is on the cytoplasmic side. The helical transmembrane segment at 152–172 (VKLLIGFVWVTSALVALPLLF) threads the bilayer. The Extracellular segment spans residues 173–217 (AMGIEYPLVNVPTHKGLNCNLSRTRHHDEPGNSNMSICTNLSNRW). Asn192 and Asn206 each carry an N-linked (GlcNAc...) asparagine glycan. A helical transmembrane segment spans residues 218–242 (EVFQSSIFGAFAVYLVVLASVAFMC). Over 243-283 (WNMMKVLMKSKQGTLAGTGPQLQLRKSESEESRTARRQTII) the chain is Cytoplasmic. The chain crosses the membrane as a helical span at residues 284–305 (FLRLIVVTLAVCWMPNQIRRIM). Topologically, residues 306-323 (AAAKPKHDWTRTYFRAYM) are extracellular. A helical transmembrane segment spans residues 324–344 (ILLPFSDTFFYLSSVVNPLLY). The Cytoplasmic portion of the chain corresponds to 345–456 (NVSSQQFRKV…TENSLQEQEV (112 aa)). Ser397 carries the phosphoserine modification. Positions 415-456 (FQTEAKPGEAKPQPLSPESPQTGSETKPAGSTTENSLQEQEV) are disordered. The span at 430-456 (SPESPQTGSETKPAGSTTENSLQEQEV) shows a compositional bias: polar residues.

This sequence belongs to the G-protein coupled receptor 1 family. Interacts with HTR1A. Interacts with GALR1. In terms of tissue distribution, expression is detected in septumamygdala, parietal cells, enterocytes, neurons and pancreas, in peripheral organs such as the duodenum and kidney but not in the pituitary and hypothalamus.

It is found in the cell membrane. Zinc-sensing receptor that can sense changes in extracellular Zn(2+), mediate Zn(2+) signal transmission, and participates in the regulation of numerous physiological processes including glucose homeostasis regulation, gastrointestinal mobility, hormone secretion and cell death. Activation by Zn(2+) in keratinocytes increases the intracellular concentration of Ca(2+) and activates the ERK/MAPK and PI3K/AKT signaling pathways leading to epithelial repair. Plays an essential role in normal wound healing by inducing the production of cytokines including the major inflammatory cytokine IL6 via the PKC/MAPK/CEBPB pathway. Regulates adipose tissue metabolism, especially lipolysis, and regulates the function of lipases, such as hormone-sensitive lipase and adipose triglyceride lipase. Plays a role in the inhibition of cell death and protects against oxidative, endoplasmic reticulum and mitochondrial stress by inducing secretion of the cytoprotective pigment epithelium-derived growth factor (PEDF) and probably other protective transcripts in a GNA13/RHOA/SRE-dependent manner. Forms dynamic heteroreceptor complexes with HTR1A and GALR1 depending on cell type or specific physiological states, resulting in signaling diversity: HTR1A-GPR39 shows additive increase in signaling along the serum response element (SRE) and NF-kappa-B pathways while GALR1 acts as an antagonist blocking SRE. The chain is G-protein coupled receptor 39 (Gpr39) from Mus musculus (Mouse).